Consider the following 1368-residue polypeptide: Mediator of RNA polymerase II transcription subunit 23 (1368 aa).

The disordered stretch occupies residues 1343–1368 (VPPQAMNSGSPAPQSNQVPVSLPVTQ). The segment covering 1347–1368 (AMNSGSPAPQSNQVPVSLPVTQ) has biased composition (polar residues).

Belongs to the Mediator complex subunit 23 family. In terms of assembly, interacts with ELK1. Component of the Mediator complex, which is composed of MED1, MED4, MED6, MED7, MED8, MED9, MED10, MED11, MED12, MED13, MED13L, MED14, MED15, MED16, MED17, MED18, MED19, MED20, MED21, MED22, MED23, MED24, MED25, MED26, MED27, MED29, MED30, MED31, CCNC, CDK8 and CDC2L6/CDK11. The MED12, MED13, CCNC and CDK8 subunits form a distinct module termed the CDK8 module. Mediator containing the CDK8 module is less active than Mediator lacking this module in supporting transcriptional activation. Individual preparations of the Mediator complex lacking one or more distinct subunits have been variously termed ARC, CRSP, DRIP, PC2, SMCC and TRAP. Interacts with CEBPB (when not methylated), CTNNB1, and GLI3. Interacts with the adenovirus E1A protein.

The protein resides in the nucleus. Required for transcriptional activation subsequent to the assembly of the pre-initiation complex. Component of the Mediator complex, a coactivator involved in the regulated transcription of nearly all RNA polymerase II-dependent genes. Mediator functions as a bridge to convey information from gene-specific regulatory proteins to the basal RNA polymerase II transcription machinery. Mediator is recruited to promoters by direct interactions with regulatory proteins and serves as a scaffold for the assembly of a functional pre-initiation complex with RNA polymerase II and the general transcription factors. Required for transcriptional activation by adenovirus E1A protein. Required for ELK1-dependent transcriptional activation in response to activated Ras signaling. The polypeptide is Mediator of RNA polymerase II transcription subunit 23 (MED23) (Homo sapiens (Human)).